Here is a 300-residue protein sequence, read N- to C-terminus: Glycine betaine/carnitine transport binding protein GbuC (300 aa).

The signal sequence occupies residues 1-20 (MLKKLITTAVLAMLIFTLAA). Cys-21 is lipidated: N-palmitoyl cysteine. Residue Cys-21 is the site of S-diacylglycerol cysteine attachment.

The complex is composed of two ATP-binding proteins (GbuA), two transmembrane proteins (GbuB) and a solute-binding protein (GbuC).

It localises to the cell membrane. With respect to regulation, the complex is activated by an osmotic gradient or by low temperature. Part of the ABC transporter complex GbuABC involved in glycine betaine uptake. Involved, with BetL and OpuC, in osmoprotection and cryoprotection of Listeria. Can also uptake carnitine when carnitine is abundant in the growth medium. In Listeria monocytogenes serotype 1/2a (strain 10403S), this protein is Glycine betaine/carnitine transport binding protein GbuC (gbuC).